The following is a 347-amino-acid chain: Heme A synthase (347 aa).

Transmembrane regions (helical) follow at residues 14-34, 96-116, 129-149, 162-182, 199-219, 260-280, 287-307, and 311-331; these read VKIW…IGGI, FHRL…LYFM, FILI…MVKS, LAMH…HFLL, VFYI…LVAG, FIHE…LLVL, MYLL…TFIY, and IILA…SIYL. Residue His262 participates in heme binding. His317 is a heme binding site.

This sequence belongs to the COX15/CtaA family. Type 2 subfamily. Interacts with CtaB. Heme b serves as cofactor.

It is found in the cell membrane. It catalyses the reaction Fe(II)-heme o + 2 A + H2O = Fe(II)-heme a + 2 AH2. The protein operates within porphyrin-containing compound metabolism; heme A biosynthesis; heme A from heme O: step 1/1. Its function is as follows. Catalyzes the conversion of heme O to heme A by two successive hydroxylations of the methyl group at C8. The first hydroxylation forms heme I, the second hydroxylation results in an unstable dihydroxymethyl group, which spontaneously dehydrates, resulting in the formyl group of heme A. The sequence is that of Heme A synthase from Ehrlichia ruminantium (strain Welgevonden).